A 165-amino-acid chain; its full sequence is Transcription elongation factor A protein-like 1 (165 aa).

2 disordered regions span residues 1–66 and 89–124; these read MENS…LLPE and IPME…GDIH. A compositionally biased stretch (acidic residues) spans 33 to 60; that stretch reads CSEDDQSSEDLSSEEQSSDEEFFPEELL. Basic and acidic residues predominate over residues 101 to 124; it reads HKLEEGSFKERLARSRPQFRGDIH.

It belongs to the TFS-II family. TFA subfamily.

Its subcellular location is the nucleus. Functionally, may be involved in transcriptional regulation. Modulates various viral and cellular promoters in a promoter context-dependent manner. Does not bind DNA directly. The sequence is that of Transcription elongation factor A protein-like 1 from Rattus norvegicus (Rat).